Here is a 469-residue protein sequence, read N- to C-terminus: Glutamate--tRNA ligase (469 aa).

The short motif at 11–21 (PSPTGFIHLGN) is the 'HIGH' region element. Residues 118-131 (GEKPRYDGTWRPEP) are compositionally biased toward basic and acidic residues. A disordered region spans residues 118 to 139 (GEKPRYDGTWRPEPGKVLPEPP). The 'KMSKS' region motif lies at 243-247 (KMSKR). Position 246 (lysine 246) interacts with ATP.

The protein belongs to the class-I aminoacyl-tRNA synthetase family. Glutamate--tRNA ligase type 1 subfamily. In terms of assembly, monomer.

The protein resides in the cytoplasm. It carries out the reaction tRNA(Glu) + L-glutamate + ATP = L-glutamyl-tRNA(Glu) + AMP + diphosphate. Its function is as follows. Catalyzes the attachment of glutamate to tRNA(Glu) in a two-step reaction: glutamate is first activated by ATP to form Glu-AMP and then transferred to the acceptor end of tRNA(Glu). The polypeptide is Glutamate--tRNA ligase (Burkholderia pseudomallei (strain 668)).